The chain runs to 196 residues: uncharacterized protein (196 aa).

A disordered region spans residues 44-80 (RSVAVPGTEGKKAQNLRQLPAARLTYPTSSSTRPSHA).

This is an uncharacterized protein from Treponema pallidum (strain Nichols).